Here is a 304-residue protein sequence, read N- to C-terminus: Polyisoprenyl-teichoic acid--peptidoglycan teichoic acid transferase TagU (304 aa).

Residues 1–4 (MKKK) are Cytoplasmic-facing. Residues 5-25 (ILFWILGIIGILIIGGGAYAY) traverse the membrane as a helical; Signal-anchor for type II membrane protein segment. The Extracellular segment spans residues 26 to 304 (SIYSSVSKTL…KLRAHLEVTK (279 aa)).

This sequence belongs to the LytR/CpsA/Psr (LCP) family.

Its subcellular location is the cell membrane. Its pathway is cell wall biogenesis. Its function is as follows. May catalyze the final step in cell wall teichoic acid biosynthesis, the transfer of the anionic cell wall polymers (APs) from their lipid-linked precursor to the cell wall peptidoglycan (PG). This is Polyisoprenyl-teichoic acid--peptidoglycan teichoic acid transferase TagU from Bacillus cereus (strain ATCC 14579 / DSM 31 / CCUG 7414 / JCM 2152 / NBRC 15305 / NCIMB 9373 / NCTC 2599 / NRRL B-3711).